An 846-amino-acid polypeptide reads, in one-letter code: Rho GTPase-activating protein 12 (846 aa).

Positions 12-74 constitute an SH3 domain; that stretch reads PGQVYIEVEY…PAQYVKEVTR (63 aa). Residues 152-175 show a composition bias toward polar residues; it reads LTHNNGKFNNDSHSPKVSSQNRTR. Residues 152-241 are disordered; it reads LTHNNGKFNN…PPNQGRPDSP (90 aa). Phosphoserine occurs at positions 165 and 176. A compositionally biased stretch (polar residues) spans 191 to 200; the sequence is TSFSQEQSCD. Phosphoserine is present on residues serine 201, serine 213, and serine 215. Over residues 224-234 the composition is skewed to polar residues; it reads TEQIRATTPPN. Phosphothreonine is present on residues threonine 230 and threonine 231. Residue serine 240 is modified to Phosphoserine. The residue at position 243 (tyrosine 243) is a Phosphotyrosine. WW domains follow at residues 265-298 and 358-391; these read IQIN…PPRW and DYTN…LPKY. Residues 293 to 316 form a disordered region; the sequence is WKPPRWTRDASISKGDFQNPGDQE. Disordered stretches follow at residues 428–466 and 580–629; these read DTND…DQEK and ETDE…TKKN. Residues 445-461 show a composition bias toward polar residues; that stretch reads NESSPSSPKHQDTASSP. Positions 463-575 constitute a PH domain; the sequence is DQEKYGLLNV…WFKVLSSTIN (113 aa). The span at 580–590 shows a compositional bias: acidic residues; the sequence is ETDEGIEEEIP. Serine 592 bears the Phosphoserine mark. Over residues 594–609 the composition is skewed to basic and acidic residues; sequence GIEKHDKEKEQKDPKK. Residues 656–844 form the Rho-GAP domain; sequence SNLANLCQRE…LILLELSSIF (189 aa).

Its function is as follows. GTPase activator for the Rho-type GTPases by converting them to an inactive GDP-bound state. This chain is Rho GTPase-activating protein 12 (ARHGAP12), found in Homo sapiens (Human).